Reading from the N-terminus, the 388-residue chain is Pentatricopeptide repeat-containing protein 2, mitochondrial (388 aa).

The PPR repeat unit spans residues 166 to 200 (TSFNILMDMLFIKGKYKSALQVLIEMKNQDVKFTK). Ser382 carries the post-translational modification Phosphoserine.

It belongs to the PTCD2 family.

Its subcellular location is the mitochondrion. In terms of biological role, involved in mitochondrial RNA maturation and mitochondrial respiratory chain function. This Homo sapiens (Human) protein is Pentatricopeptide repeat-containing protein 2, mitochondrial (PTCD2).